The primary structure comprises 880 residues: Alanine--tRNA ligase (880 aa).

The Zn(2+) site is built by His-567, His-571, Cys-669, and His-673.

The protein belongs to the class-II aminoacyl-tRNA synthetase family. The cofactor is Zn(2+).

It is found in the cytoplasm. The catalysed reaction is tRNA(Ala) + L-alanine + ATP = L-alanyl-tRNA(Ala) + AMP + diphosphate. Its function is as follows. Catalyzes the attachment of alanine to tRNA(Ala) in a two-step reaction: alanine is first activated by ATP to form Ala-AMP and then transferred to the acceptor end of tRNA(Ala). Also edits incorrectly charged Ser-tRNA(Ala) and Gly-tRNA(Ala) via its editing domain. This chain is Alanine--tRNA ligase, found in Bacillus cereus (strain ATCC 14579 / DSM 31 / CCUG 7414 / JCM 2152 / NBRC 15305 / NCIMB 9373 / NCTC 2599 / NRRL B-3711).